A 184-amino-acid chain; its full sequence is MVLMKDEVEVIGFDDAPFNKADKVCILIGTYMRGNRIIDGIYFRKFKKDGMDVTEKIIDIVKEKHYKKIKVIFLAGITFGGFNIADLWEINKETEKPVIVVIDKYPNKEKIFLALKKYFDDADERIKLINSFPEPEKMENIYVQYVGADKEFVKNVIKKTKLKSKIPECLRISHLIGRGFLGLR.

The protein belongs to the UPF0215 family.

The chain is UPF0215 protein MJ1150 from Methanocaldococcus jannaschii (strain ATCC 43067 / DSM 2661 / JAL-1 / JCM 10045 / NBRC 100440) (Methanococcus jannaschii).